The following is a 589-amino-acid chain: Probable cytochrome P450 49a1 (589 aa).

Residues T56–T90 are disordered. Positions G57–P71 are enriched in polar residues. Over residues V72–S84 the composition is skewed to low complexity. Residue C536 coordinates heme.

Belongs to the cytochrome P450 family. Heme is required as a cofactor.

The protein localises to the endoplasmic reticulum membrane. Its subcellular location is the microsome membrane. May be involved in the metabolism of insect hormones and in the breakdown of synthetic insecticides. The polypeptide is Probable cytochrome P450 49a1 (Cyp49a1) (Drosophila melanogaster (Fruit fly)).